The sequence spans 499 residues: Trichoplein keratin filament-binding protein (499 aa).

Residues 12-38 (SRVRTLEQQLVRQREQEARLRRQWEQH) are a coiled coil. Disordered stretches follow at residues 46–78 (DVRS…EEKQ) and 169–209 (VQQQ…EEEN). Residues 50–67 (SKQAQWSSRQSFHRSMSA) show a composition bias toward polar residues. Composition is skewed to basic and acidic residues over residues 69 to 78 (QRDRMREEKQ) and 172 to 209 (QEKK…EEEN). Coiled-coil stretches lie at residues 71–133 (DRMR…ERRK), 168–306 (QVQQ…ALLE), and 359–484 (WEKR…MIRQ). Positions 74–499 (REEKQRKLEE…IHSRPRSAWT (426 aa)) are interaction with keratin proteins. Residues 260-426 (KMMEESRRKT…RLTLRLEKEQ (167 aa)) form a trichohyalin/plectin homology domain region.

The protein belongs to the TCHP family.

The protein resides in the cytoplasm. It localises to the cytoskeleton. It is found in the microtubule organizing center. Its subcellular location is the centrosome. In terms of biological role, may act as a 'capping' or 'branching' protein for keratin filaments in the cell periphery. May regulate K8/K18 filament and desmosome organization mainly at the apical or peripheral regions of simple epithelial cells. The polypeptide is Trichoplein keratin filament-binding protein (Danio rerio (Zebrafish)).